The chain runs to 222 residues: Charged multivesicular body protein 2a (222 aa).

N-acetylmethionine is present on M1. Residues E12 to Q53 are a coiled coil. Residues M56 to D222 form an interaction with VPS4B region. The span at L179–S188 shows a compositional bias: polar residues. The segment at L179–A198 is disordered. S184 bears the Phosphoserine mark. Residue T185 is modified to Phosphothreonine. Residues S188, S190, and S203 each carry the phosphoserine modification. Residues G195–D222 adopt a coiled-coil conformation. The MIT-interacting motif signature appears at A210 to R220. The segment at K217–D222 is interaction with VTA1.

The protein belongs to the SNF7 family. As to quaternary structure, probable core component of the endosomal sorting required for transport complex III (ESCRT-III). ESCRT-III components are thought to multimerize to form a flat lattice on the perimeter membrane of the endosome. Several assembly forms of ESCRT-III may exist that interact and act sequentially. In vitro, heteromerizes with CHMP3 (but not CHMP4) to form helical tubular structures that expose membrane-interacting sites on the outside whereas VPS4B can associate on the inside of the tubule. Interacts with CHMP1B, CHMP2B, CHMP3, CHMP4A, CHMP4B, CHMP4C and CHMP5. Interacts with VPS4A; the interaction is direct. Interacts with VPS4B; the interaction is direct. Interacts with MITD1. Interacts with VTA1; the interaction probably involves the open conformation of CHMP2A. Post-translationally, ISGylated in a CHMP5-dependent manner. Isgylation weakens and inhibits its interactions with VPS4A and VTA1 respectively. As to expression, widely expressed. Highly expressed in brain, heart, liver and kidney.

It localises to the late endosome membrane. The protein localises to the cytoplasm. It is found in the nucleus envelope. Probable core component of the endosomal sorting required for transport complex III (ESCRT-III) which is involved in multivesicular bodies (MVBs) formation and sorting of endosomal cargo proteins into MVBs. MVBs contain intraluminal vesicles (ILVs) that are generated by invagination and scission from the limiting membrane of the endosome and mostly are delivered to lysosomes enabling degradation of membrane proteins, such as stimulated growth factor receptors, lysosomal enzymes and lipids. The MVB pathway appears to require the sequential function of ESCRT-O, -I,-II and -III complexes. ESCRT-III proteins mostly dissociate from the invaginating membrane before the ILV is released. The ESCRT machinery also functions in topologically equivalent membrane fission events, such as the terminal stages of cytokinesis. Together with SPAST, the ESCRT-III complex promotes nuclear envelope sealing and mitotic spindle disassembly during late anaphase. Recruited to the reforming nuclear envelope (NE) during anaphase by LEMD2. ESCRT-III proteins are believed to mediate the necessary vesicle extrusion and/or membrane fission activities, possibly in conjunction with the AAA ATPase VPS4. The sequence is that of Charged multivesicular body protein 2a (Chmp2a) from Mus musculus (Mouse).